The sequence spans 636 residues: Tumor protein p73 (636 aa).

A transactivation region spans residues 1–46; that stretch reads MAQSTATSPDGGTTFEHLWSSLEPDSTYFDLPQSSRGNNEVVGGTD. Thr-27 bears the Phosphothreonine; by PLK1 mark. Tyr-28 is modified (phosphotyrosine; by SRC and HCK). The tract at residues 78–104 is disordered; it reads RAASASPYTPEHAASVPTHSPYAQPSS. Over residues 94-104 the composition is skewed to polar residues; that stretch reads PTHSPYAQPSS. The residue at position 99 (Tyr-99) is a Phosphotyrosine; by ABL1. Positions 131 to 310 are DNA-binding; sequence FQQSSTAKSA…DRKADEDHYR (180 aa). The Zn(2+) site is built by Cys-194, His-197, Cys-258, and Cys-262. The segment at 314 to 345 is disordered; that stretch reads ALNESSAKNGAASKRAFKQSPPAVPALGAGVK. Positions 345 to 380 are interaction with HIPK2; that stretch reads KKRRHGDEDTYYLQVRGRENFEILMKLKESLELMEL. The tract at residues 345–386 is oligomerization; the sequence is KKRRHGDEDTYYLQVRGRENFEILMKLKESLELMELVPQPLV. A PPxY motif motif is present at residues 483 to 487; sequence PPPPY. In terms of domain architecture, SAM spans 485–551; it reads PPYHADPSLV…WRGLQDLKQG (67 aa). Lys-627 is covalently cross-linked (Glycyl lysine isopeptide (Lys-Gly) (interchain with G-Cter in SUMO); in isoform Alpha). Lys-627 is covalently cross-linked (Glycyl lysine isopeptide (Lys-Gly) (interchain with G-Cter in SUMO2)).

It belongs to the p53 family. As to quaternary structure, found in a complex with p53/TP53 and CABLES1. The C-terminal oligomerization domain binds to the ABL1 tyrosine kinase SH3 domain. Interacts with HECW2. Isoform Beta interacts homotypically and with p53/TP53, whereas isoform Alpha does not. Isoform Gamma interacts homotypically and with all p73 isoforms. Isoform Delta interacts with isoform Gamma, isoform Alpha, and homotypically. Isoforms Alpha and Beta interact with HIPK2. Isoform Alpha interacts with RANBP9. Isoform Beta interacts with WWOX. Interacts (via SAM domain) with FBXO45 (via B30.2/SPRY domain). Interacts with YAP1 (phosphorylated form). Interacts with HCK (via SH3 domain); this inhibits TP73 activity and degradation. Interacts (via SAM domain) with NQO1; this interaction is NADH-dependent, stabilizes TP73 in response to oxidative stress and protects it from ubiquitin-independent degradation by the 20S proteasome. (Microbial infection) Interacts with Epstein-Barr virus protein EBNA6; this interaction inhibits TP73-mediated apoptotic pathway. It depends on Zn(2+) as a cofactor. Isoform alpha (but not isoform beta) is sumoylated on Lys-627, which potentiates proteasomal degradation but does not affect transcriptional activity. Phosphorylation by PLK1 and PLK3 inhibits the transcription regulator activity and pro-apoptotic function. Post-translationally, higher levels of phosphorylation seen in the brain from patients with Huntington disease. In terms of processing, polyubiquitinated by RCHY1/PIRH2; leading to its degradation by the proteasome. As to expression, expressed in striatal neurons of patients with Huntington disease (at protein level). Brain, kidney, placenta, colon, heart, liver, spleen, skeletal muscle, prostate, thymus and pancreas. Highly expressed in fetal tissue. Expressed in the respiratory epithelium.

Its subcellular location is the nucleus. It localises to the cytoplasm. Functionally, participates in the apoptotic response to DNA damage. Isoforms containing the transactivation domain are pro-apoptotic, isoforms lacking the domain are anti-apoptotic and block the function of p53 and transactivating p73 isoforms. May be a tumor suppressor protein. Is an activator of FOXJ1 expression. It is an essential factor for the positive regulation of lung ciliated cell differentiation. The polypeptide is Tumor protein p73 (TP73) (Homo sapiens (Human)).